A 225-amino-acid polypeptide reads, in one-letter code: uncharacterized protein (225 aa).

A run of 6 helical transmembrane segments spans residues 25–45, 57–77, 83–103, 109–129, 135–155, and 187–207; these read MMLA…IPFL, VFLI…ITVA, FIWD…NFAI, LYFH…SLAT, LLTT…FGYV, and IFAL…LIGV.

The protein localises to the cell membrane. This is an uncharacterized protein from Mycoplasma pneumoniae (strain ATCC 29342 / M129 / Subtype 1) (Mycoplasmoides pneumoniae).